We begin with the raw amino-acid sequence, 101 residues long: Phosphoribosyl-AMP cyclohydrolase (101 aa).

Asp71 contributes to the Mg(2+) binding site. Cys72 is a binding site for Zn(2+). Residues Asp73 and Asp75 each contribute to the Mg(2+) site. Positions 88 and 95 each coordinate Zn(2+).

Belongs to the PRA-CH family. Homodimer. Mg(2+) serves as cofactor. Zn(2+) is required as a cofactor.

The protein localises to the cytoplasm. The catalysed reaction is 1-(5-phospho-beta-D-ribosyl)-5'-AMP + H2O = 1-(5-phospho-beta-D-ribosyl)-5-[(5-phospho-beta-D-ribosylamino)methylideneamino]imidazole-4-carboxamide. It participates in amino-acid biosynthesis; L-histidine biosynthesis; L-histidine from 5-phospho-alpha-D-ribose 1-diphosphate: step 3/9. Catalyzes the hydrolysis of the adenine ring of phosphoribosyl-AMP. The chain is Phosphoribosyl-AMP cyclohydrolase from Bacillus cereus (strain ATCC 10987 / NRS 248).